Consider the following 149-residue polypeptide: Putative pre-16S rRNA nuclease (149 aa).

Belongs to the YqgF nuclease family.

The protein localises to the cytoplasm. Functionally, could be a nuclease involved in processing of the 5'-end of pre-16S rRNA. This is Putative pre-16S rRNA nuclease from Synechococcus elongatus (strain ATCC 33912 / PCC 7942 / FACHB-805) (Anacystis nidulans R2).